Consider the following 147-residue polypeptide: uncharacterized protein (147 aa).

2 helical membrane-spanning segments follow: residues 41 to 61 and 67 to 87; these read LANF…ALLI and LLAA…SFPL.

It localises to the cell membrane. This is an uncharacterized protein from Pyrococcus horikoshii (strain ATCC 700860 / DSM 12428 / JCM 9974 / NBRC 100139 / OT-3).